The chain runs to 83 residues: Large ribosomal subunit protein eL37 (83 aa).

Positions 19, 22, 34, and 37 each coordinate Zn(2+). The C4-type zinc finger occupies 19–37; sequence CRRCGRNSYHVQWERCAAC.

The protein belongs to the eukaryotic ribosomal protein eL37 family. Requires Zn(2+) as cofactor.

In terms of biological role, binds to the 23S rRNA. In Leishmania donovani, this protein is Large ribosomal subunit protein eL37 (RPL37).